Here is a 361-residue protein sequence, read N- to C-terminus: MSGAGKRVVVGMSGGVDSSVTAWLLKQQGYEVIGLFMKNWEDDDDSEYCSTRQDWLDVVSVADLIGVDVEAVNFAAEYKDRVFADFLREYSAGRTPNPDVLCNAEIKFKAFLDHAMSLGAETIATGHYARVRQNAAGRFELLKALDHTKDQSYFLHRLNQAQLSRTLFPLGEIPKTRVREIAAEIGLPNAKKKDSTGICFIGERPFRDFLNRYLPTKPGPMKTPEGKVVGEHIGLAFYTLGQRKGIGLGGSREGNGDAWYVARKDMANNTLYVVQGHDHPWLLTPVLTASDLSWVAGEPPAAGAAMAAKTRYRQSDAACTVQAVDGDALTLRFAEAQWAVTPGQSAVLYDGDICLGGGIIQ.

ATP contacts are provided by residues G11–S18 and M37. An interaction with target base in tRNA region spans residues N97–D99. The active-site Nucleophile is C102. Residues C102 and C199 are joined by a disulfide bond. G126 contacts ATP. Residues K149–Q151 form an interaction with tRNA region. Catalysis depends on C199, which acts as the Cysteine persulfide intermediate. The tract at residues R311–Y312 is interaction with tRNA.

Belongs to the MnmA/TRMU family.

The protein localises to the cytoplasm. It catalyses the reaction S-sulfanyl-L-cysteinyl-[protein] + uridine(34) in tRNA + AH2 + ATP = 2-thiouridine(34) in tRNA + L-cysteinyl-[protein] + A + AMP + diphosphate + H(+). In terms of biological role, catalyzes the 2-thiolation of uridine at the wobble position (U34) of tRNA, leading to the formation of s(2)U34. In Cupriavidus necator (strain ATCC 17699 / DSM 428 / KCTC 22496 / NCIMB 10442 / H16 / Stanier 337) (Ralstonia eutropha), this protein is tRNA-specific 2-thiouridylase MnmA.